We begin with the raw amino-acid sequence, 128 residues long: Large ribosomal subunit protein bL21 (128 aa).

Residues 104–128 (GKSPSVGPRPKRVKAEPAPAADAAE) form a disordered region. The span at 119–128 (EPAPAADAAE) shows a compositional bias: low complexity.

This sequence belongs to the bacterial ribosomal protein bL21 family. In terms of assembly, part of the 50S ribosomal subunit. Contacts protein L20.

In terms of biological role, this protein binds to 23S rRNA in the presence of protein L20. This Rhodopseudomonas palustris (strain HaA2) protein is Large ribosomal subunit protein bL21.